The primary structure comprises 149 residues: Putative pre-16S rRNA nuclease (149 aa).

It belongs to the YqgF nuclease family.

The protein localises to the cytoplasm. Functionally, could be a nuclease involved in processing of the 5'-end of pre-16S rRNA. The polypeptide is Putative pre-16S rRNA nuclease (Heliobacterium modesticaldum (strain ATCC 51547 / Ice1)).